A 379-amino-acid chain; its full sequence is Chaperone protein DnaJ (379 aa).

A J domain is found at 5–69; that stretch reads EFYDRLGVSK…QKRAAYDQYG (65 aa). A CR-type zinc finger spans residues 135–217; it reads GAEKEVSYNR…CHGTGHEKKT (83 aa). The Zn(2+) site is built by Cys148, Cys151, Cys165, Cys168, Cys191, Cys194, Cys205, and Cys208. 4 CXXCXGXG motif repeats span residues 148–155, 165–172, 191–198, and 205–212; these read CHTCSGSG, CQKCHGSG, CDVCQGSG, and CPTCHGTG.

It belongs to the DnaJ family. As to quaternary structure, homodimer. The cofactor is Zn(2+).

It is found in the cytoplasm. In terms of biological role, participates actively in the response to hyperosmotic and heat shock by preventing the aggregation of stress-denatured proteins and by disaggregating proteins, also in an autonomous, DnaK-independent fashion. Unfolded proteins bind initially to DnaJ; upon interaction with the DnaJ-bound protein, DnaK hydrolyzes its bound ATP, resulting in the formation of a stable complex. GrpE releases ADP from DnaK; ATP binding to DnaK triggers the release of the substrate protein, thus completing the reaction cycle. Several rounds of ATP-dependent interactions between DnaJ, DnaK and GrpE are required for fully efficient folding. Also involved, together with DnaK and GrpE, in the DNA replication of plasmids through activation of initiation proteins. This Streptococcus agalactiae serotype III (strain NEM316) protein is Chaperone protein DnaJ.